A 387-amino-acid chain; its full sequence is (S)-8-oxocitronellyl enol synthase (387 aa).

Residues 36 to 38, 64 to 65, 82 to 83, 106 to 107, and Gln140 contribute to the NADP(+) site; these read TGI, RR, DI, and SW. Catalysis depends on residues Lys144 and Tyr177. Substrate-binding residues include Lys144 and Tyr177. NADP(+) is bound by residues Tyr177 and 211 to 213; that span reads SMM.

This sequence belongs to the short-chain dehydrogenases/reductases (SDR) family. Highly divergent. In terms of tissue distribution, expressed in leaves.

The catalysed reaction is (S)-8-oxocitronellyl enol + NADP(+) = (6E)-8-oxogeranial + NADPH + H(+). The enzyme catalyses (S)-8-oxocitronellyl enol + NAD(+) = (6E)-8-oxogeranial + NADH + H(+). It carries out the reaction (R)-8-oxocitronellyl enol + NADP(+) = (6E)-8-oxogeranial + NADPH + H(+). Functionally, iridoid synthase that catalyzes the first step in generation of the iridoid ring scaffold using the linear monoterpene (6E)-8-oxogeranial as substrate. Reduces 8-oxogeranial, generating an unstable product that is subsequently cyclized into several possible products, either non-enzymically or by dedicated cyclases. Iridoids comprise a large family of distinctive bicyclic monoterpenes that possess a wide range of pharmacological activities, including anticancer, anti-inflammatory, antifungal and antibacterial activities. This chain is (S)-8-oxocitronellyl enol synthase, found in Antirrhinum majus (Garden snapdragon).